Consider the following 293-residue polypeptide: Probable chromosome 2-partitioning protein ParB (293 aa).

This sequence belongs to the ParB family.

Functionally, involved in chromosome partition. Localize to both poles of the predivisional cell following completion of DNA replication. Binds to the DNA origin of replication. In Deinococcus radiodurans (strain ATCC 13939 / DSM 20539 / JCM 16871 / CCUG 27074 / LMG 4051 / NBRC 15346 / NCIMB 9279 / VKM B-1422 / R1), this protein is Probable chromosome 2-partitioning protein ParB (parB2).